The chain runs to 842 residues: Netrin receptor UNC5A (842 aa).

An N-terminal signal peptide occupies residues 1–25 (MAVRPGLWPALLGIVLAAWLRGSGA). Residues 26–306 (QQSATVANPV…ASGPEDVALY (281 aa)) are Extracellular-facing. Positions 44–141 (PHFLVEPEDV…SGTTKSQKAY (98 aa)) constitute an Ig-like domain. Cystine bridges form between Cys65–Cys126, Cys77–Cys124, and Cys170–Cys221. N-linked (GlcNAc...) asparagine glycosylation is found at Asn107 and Asn218. Residues 155–234 (PLAKEVSLEQ…NIVARRRSAS (80 aa)) enclose the Ig-like C2-type domain. Residues 242 to 294 (DGSWSPWSKWSACGLDCTHWRSRECSDPAPRNGGEECQGTDLDTRNCTSDLCV) enclose the TSP type-1 domain. 3 C-linked (Man) tryptophan glycosylation sites follow: Trp245, Trp248, and Trp251. Disulfide bonds link Cys254/Cys288, Cys258/Cys293, and Cys266/Cys278. The N-linked (GlcNAc...) asparagine glycan is linked to Asn287. The helical transmembrane segment at 307 to 327 (VGLIAVAVCLVLLLLVLILVY) threads the bilayer. The Cytoplasmic segment spans residues 328–842 (CRKKEGLDSD…GLFTVSEAEC (515 aa)). Residues 441–584 (NMTYGTFNFL…LGRFALVGEA (144 aa)) enclose the ZU5 domain. The interval 605–623 (SLEYNIRVYCLHDTHDALK) is interaction with DCC. A Death domain is found at 761-841 (QKIISSLDPP…AGLFTVSEAE (81 aa)).

Belongs to the unc-5 family. As to quaternary structure, homodimer and homooligomer. Interacts with the cytoplasmic part of DCC. Interacts with MAGED1. Interacts with PRKCABP, possibly mediating some interaction with PKC. Interacts (via extracellular domain) with FLRT2 (via extracellular domain). Interacts (via extracellular domain) with FLRT3 (via extracellular domain). In terms of processing, phosphorylated on cytoplasmic tyrosine residues. Phosphorylated by PKC in vitro. Proteolytically cleaved by caspases during apoptosis. The cleavage does not take place when the receptor is associated with netrin ligand. Its cleavage by caspases is required to induce apoptosis. Post-translationally, the two extracellular TSRs of UNC5A contain WxxWxxWxxC motifs that can be C-mannosylated on all tryptophans. DPY19L1 preferentially mannosylates the first two tryptophans and DPY19L3 prefers the third. C-mannosylation by DPY19L1 is required for transport of UNC5A from the endoplasmic reticulum to the cell surface.

It is found in the cell membrane. The protein resides in the membrane raft. Its subcellular location is the cell projection. It localises to the neuron projection. Receptor for netrin required for axon guidance. Functions in the netrin signaling pathway and promotes neurite outgrowth in response to NTN1. Mediates axon repulsion of neuronal growth cones in the developing nervous system in response to netrin. Axon repulsion in growth cones may be mediated by its association with DCC that may trigger signaling for repulsion. It also acts as a dependence receptor required for apoptosis induction when not associated with netrin ligand. In Homo sapiens (Human), this protein is Netrin receptor UNC5A (UNC5A).